Consider the following 30-residue polypeptide: Hemocyanin subunit 2 (30 aa).

This sequence belongs to the tyrosinase family. Hemocyanin subfamily. In terms of tissue distribution, hemolymph.

It is found in the secreted. The protein resides in the extracellular space. Its function is as follows. Hemocyanins are copper-containing oxygen carriers occurring freely dissolved in the hemolymph of many mollusks and arthropods. The protein is Hemocyanin subunit 2 of Homarus americanus (American lobster).